The following is a 132-amino-acid chain: L-ectoine synthase (132 aa).

The protein belongs to the ectoine synthase family.

It catalyses the reaction (2S)-4-acetamido-2-aminobutanoate = L-ectoine + H2O. The protein operates within amine and polyamine biosynthesis; ectoine biosynthesis; L-ectoine from L-aspartate 4-semialdehyde: step 3/3. Catalyzes the circularization of gamma-N-acetyl-alpha,gamma-diaminobutyric acid (ADABA) to ectoine (1,4,5,6-tetrahydro-2-methyl-4-pyrimidine carboxylic acid), which is an excellent osmoprotectant. The polypeptide is L-ectoine synthase (Rhodococcus opacus (strain B4)).